An 857-amino-acid polypeptide reads, in one-letter code: Envelope glycoprotein gp160 (857 aa).

The N-terminal stretch at 1 to 26 (MAHTSNHLFILLLLISVYGFLGHKKN) is a signal peptide. Topologically, residues 27 to 682 (YVTVFYGIPA…FTSWMAYIRL (656 aa)) are extracellular. An N-linked (GlcNAc...) asparagine; by host glycan is attached at N39. A disulfide bridge links C46 with C59. 22 N-linked (GlcNAc...) asparagine; by host glycosylation sites follow: N72, N81, N116, N121, N142, N150, N167, N193, N205, N237, N240, N271, N277, N288, N299, N309, N364, N397, N407, N447, N464, and N469. Intrachain disulfides connect C103-C213, C110-C204, C115-C164, C226-C256, and C236-C248. The segment at 115 to 163 (CNNTGTNTTTKPITTPITTTKPSENLLNDTSPCIKNDTCPGIGLENTVD) is V1. The interval 164-204 (CYFNMTGLRRDEKKQYKDTWYEKDLECNGNSTSTICYMRTC) is V2. Residues 304 to 336 (CRRPGNKTVIPITIMSGLNFHSQPLNTRPRQAW) form a V3 region. C304 and C337 are oxidised to a cystine. Disulfide bonds link C389/C446 and C396/C419. The interval 396–419 (CNMTWFLNWVENRTGTTQKNYVTC) is V4. Residues 464–472 (NDTKTNITM) are V5. The tract at residues 515–535 (GVMVLGFLGLLAMAGSAMGAT) is fusion peptide. Positions 578-594 (LQTRVTAIEKYLKDQAL) are immunosuppression. Residues N614, N623, and N639 are each glycosylated (N-linked (GlcNAc...) asparagine; by host). Residues 627–648 (QQWEKRVNFLDANITALLEEAQ) are a coiled coil. The interval 660–681 (KLNSWDVFGNWFDFTSWMAYIR) is MPER; binding to GalCer. A helical membrane pass occupies residues 683 to 703 (GLYVVAGLIVLRIVIYIMQML). The Cytoplasmic portion of the chain corresponds to 704–857 (ARLRKGYRPV…IRQGLELALL (154 aa)). Positions 710 to 713 (YRPV) match the YXXV motif; contains endocytosis signal motif. C776 carries S-palmitoyl cysteine; by host lipidation. The short motif at 856–857 (LL) is the Di-leucine internalization motif element.

As to quaternary structure, the mature envelope protein (Env) consists of a homotrimer of non-covalently associated gp120-gp41 heterodimers. The resulting complex protrudes from the virus surface as a spike. There seems to be as few as 10 spikes on the average virion. Interacts with human CD4, CCR5 and CXCR4, to form a P4HB/PDI-CD4-CXCR4-gp120 complex. Gp120 also interacts with the C-type lectins CD209/DC-SIGN and CLEC4M/DC-SIGNR (collectively referred to as DC-SIGN(R)). Gp120 and gp41 interact with GalCer. The mature envelope protein (Env) consists of a homotrimer of non-covalently associated gp120-gp41 heterodimers. The resulting complex protrudes from the virus surface as a spike. There seems to be as few as 10 spikes on the average virion. Post-translationally, specific enzymatic cleavages in vivo yield mature proteins. Envelope glycoproteins are synthesized as an inactive precursor that is heavily N-glycosylated and processed likely by host cell furin in the Golgi to yield the mature SU and TM proteins. The cleavage site between SU and TM requires the minimal sequence [KR]-X-[KR]-R. In terms of processing, palmitoylation of the transmembrane protein and of Env polyprotein (prior to its proteolytic cleavage) is essential for their association with host cell membrane lipid rafts. Palmitoylation is therefore required for envelope trafficking to classical lipid rafts, but not for viral replication.

The protein resides in the virion membrane. The protein localises to the host cell membrane. It localises to the host endosome membrane. In terms of biological role, the surface protein gp120 (SU) attaches the virus to the host lymphoid cell by binding to the primary receptor CD4. This interaction induces a structural rearrangement creating a high affinity binding site for a chemokine coreceptor like CXCR4 and/or CCR5. This peculiar 2 stage receptor-interaction strategy allows gp120 to maintain the highly conserved coreceptor-binding site in a cryptic conformation, protected from neutralizing antibodies. Since CD4 also displays a binding site for the disulfide-isomerase P4HB/PDI, a P4HB/PDI-CD4-CXCR4-gp120 complex may form. In that complex, P4HB/PDI could reach and reduce gp120 disulfide bonds, causing major conformational changes in gp120. TXN, another PDI family member could also be involved in disulfide rearrangements in Env during fusion. These changes are transmitted to the transmembrane protein gp41 and are thought to activate its fusogenic potential by unmasking its fusion peptide. The surface protein gp120 is a ligand for CD209/DC-SIGN and CLEC4M/DC-SIGNR, which are respectively found on dendritic cells (DCs), and on endothelial cells of liver sinusoids and lymph node sinuses. These interactions allow capture of viral particles at mucosal surfaces by these cells and subsequent transmission to permissive cells. DCs are professional antigen presenting cells, critical for host immunity by inducing specific immune responses against a broad variety of pathogens. They act as sentinels in various tissues where they take up antigen, process it, and present it to T-cells following migration to lymphoid organs. HIV subverts the migration properties of dendritic cells to gain access to CD4+ T-cells in lymph nodes. Virus transmission to permissive T-cells occurs either in trans (without DCs infection, through viral capture and transmission), or in cis (following DCs productive infection, through the usual CD4-gp120 interaction), thereby inducing a robust infection. In trans infection, bound virions remain infectious over days and it is proposed that they are not degraded, but protected in non-lysosomal acidic organelles within the DCs close to the cell membrane thus contributing to the viral infectious potential during DCs' migration from the periphery to the lymphoid tissues. On arrival at lymphoid tissues, intact virions recycle back to DCs' cell surface allowing virus transmission to CD4+ T-cells. Virion capture also seems to lead to MHC-II-restricted viral antigen presentation, and probably to the activation of HIV-specific CD4+ cells. Functionally, the transmembrane protein gp41 (TM) acts as a class I viral fusion protein. Under the current model, the protein has at least 3 conformational states: pre-fusion native state, pre-hairpin intermediate state, and post-fusion hairpin state. During fusion of viral and target intracellular membranes, the coiled coil regions (heptad repeats) assume a trimer-of-hairpins structure, positioning the fusion peptide in close proximity to the C-terminal region of the ectodomain. The formation of this structure appears to drive apposition and subsequent fusion of viral and target cell membranes. Complete fusion occurs in host cell endosomes and is dynamin-dependent, however some lipid transfer might occur at the plasma membrane. The virus undergoes clathrin-dependent internalization long before endosomal fusion, thus minimizing the surface exposure of conserved viral epitopes during fusion and reducing the efficacy of inhibitors targeting these epitopes. Membranes fusion leads to delivery of the nucleocapsid into the cytoplasm. Its function is as follows. The envelope glycoprotein gp160 precursor down-modulates cell surface CD4 antigen by interacting with it in the endoplasmic reticulum and blocking its transport to the cell surface. In terms of biological role, the gp120-gp41 heterodimer seems to contribute to T-cell depletion during HIV-1 infection. The envelope glycoproteins expressed on the surface of infected cells induce apoptosis through an interaction with uninfected cells expressing the receptor (CD4) and the coreceptors CXCR4 or CCR5. This type of bystander killing may be obtained by at least three distinct mechanisms. First, the interaction between the 2 cells can induce cellular fusion followed by nuclear fusion within the syncytium. Syncytia are condemned to die from apoptosis. Second, the 2 interacting cells may not fuse entirely and simply exchange plasma membrane lipids, after a sort of hemifusion process, followed by rapid death. Third, it is possible that virus-infected cells, on the point of undergoing apoptosis, fuse with CD4-expressing cells, in which case apoptosis is rapidly transmitted from one cell to the other and thus occurs in a sort of contagious fashion. The gp120-gp41 heterodimer allows rapid transcytosis of the virus through CD4 negative cells such as simple epithelial monolayers of the intestinal, rectal and endocervical epithelial barriers. Both gp120 and gp41 specifically recognize glycosphingolipids galactosyl-ceramide (GalCer) or 3' sulfo-galactosyl-ceramide (GalS) present in the lipid rafts structures of epithelial cells. Binding to these alternative receptors allows the rapid transcytosis of the virus through the epithelial cells. This transcytotic vesicle-mediated transport of virions from the apical side to the basolateral side of the epithelial cells does not involve infection of the cells themselves. This is Envelope glycoprotein gp160 (env) from Homo sapiens (Human).